Here is a 504-residue protein sequence, read N- to C-terminus: Lysine--tRNA ligase (504 aa).

Mg(2+) is bound by residues Glu-414 and Glu-421.

The protein belongs to the class-II aminoacyl-tRNA synthetase family. In terms of assembly, homodimer. Requires Mg(2+) as cofactor.

Its subcellular location is the cytoplasm. The catalysed reaction is tRNA(Lys) + L-lysine + ATP = L-lysyl-tRNA(Lys) + AMP + diphosphate. The polypeptide is Lysine--tRNA ligase (Photorhabdus laumondii subsp. laumondii (strain DSM 15139 / CIP 105565 / TT01) (Photorhabdus luminescens subsp. laumondii)).